The primary structure comprises 191 residues: Guanylate kinase (191 aa).

The region spanning 8 to 188 (GRLVVLAGPS…AVSDIKEILV (181 aa)) is the Guanylate kinase-like domain. 15 to 22 (GPSAVGKS) contacts ATP.

It belongs to the guanylate kinase family.

It localises to the cytoplasm. It carries out the reaction GMP + ATP = GDP + ADP. Functionally, essential for recycling GMP and indirectly, cGMP. The sequence is that of Guanylate kinase from Corynebacterium diphtheriae (strain ATCC 700971 / NCTC 13129 / Biotype gravis).